The sequence spans 476 residues: Argininosuccinate lyase (476 aa).

Over residues 1-17 (MTDTGSSDTNTDTTGTS) the composition is skewed to low complexity. The disordered stretch occupies residues 1-22 (MTDTGSSDTNTDTTGTSKANTM).

This sequence belongs to the lyase 1 family. Argininosuccinate lyase subfamily.

It is found in the cytoplasm. It catalyses the reaction 2-(N(omega)-L-arginino)succinate = fumarate + L-arginine. It participates in amino-acid biosynthesis; L-arginine biosynthesis; L-arginine from L-ornithine and carbamoyl phosphate: step 3/3. In Jannaschia sp. (strain CCS1), this protein is Argininosuccinate lyase.